The following is a 465-amino-acid chain: Pancreatic triacylglycerol lipase (465 aa).

Residues 1–16 form the signal peptide; the sequence is MLLVWSLALLLGAVAG. 2 disulfides stabilise this stretch: Cys20/Cys26 and Cys107/Cys118. Ser169 serves as the catalytic Nucleophile. Asp193 functions as the Charge relay system in the catalytic mechanism. Residues Glu204, Arg207, Asp209, and Asp212 each contribute to the Ca(2+) site. A disulfide bridge links Cys254 with Cys278. Residue His280 is the Charge relay system of the active site. Intrachain disulfides connect Cys302/Cys313, Cys316/Cys321, and Cys449/Cys465. Positions 355-465 constitute a PLAT domain; it reads WRYKVSVTLS…EDVLLTLNAC (111 aa).

It belongs to the AB hydrolase superfamily. Lipase family. In terms of assembly, forms a 1:1 stoichiometric complex with (pro)colipase/CLPS. In terms of tissue distribution, expressed in many tissues with highest expression in liver. During hibernation there is a significant increases in expression in heart, white adipose tissue (WAT), and testis; but not in pancreas.

Its subcellular location is the secreted. The enzyme catalyses a triacylglycerol + H2O = a diacylglycerol + a fatty acid + H(+). It catalyses the reaction 1,2,3-tributanoylglycerol + H2O = dibutanoylglycerol + butanoate + H(+). It carries out the reaction 1,2,3-tri-(9Z-octadecenoyl)-glycerol + H2O = di-(9Z)-octadecenoylglycerol + (9Z)-octadecenoate + H(+). The catalysed reaction is all-trans-retinyl hexadecanoate + H2O = all-trans-retinol + hexadecanoate + H(+). The enzyme catalyses 1,2-di-(9Z-octadecenoyl)-glycerol + H2O = (9Z-octadecenoyl)-glycerol + (9Z)-octadecenoate + H(+). Inhibited by bile salts, is reactivated by (pro)colipase/CLPS. In terms of biological role, plays an important role in fat metabolism. It preferentially splits the esters of long-chain fatty acids at positions 1 and 3, producing mainly 2-monoacylglycerol and free fatty acids, and shows considerably higher activity against insoluble emulsified substrates than against soluble ones. Plays a role in hibernation as a key enzyme that shows high activity at low temperatures. When expressed in the hibernating heart it liberates fatty acids from triglycerides at temperatures as low as 0 degrees Celsius. The polypeptide is Pancreatic triacylglycerol lipase (PNLIP) (Ictidomys tridecemlineatus (Thirteen-lined ground squirrel)).